We begin with the raw amino-acid sequence, 412 residues long: MTNDRVESSSGRAARKLRLALMGPAFIAAIGYIDPGNFATNIQAGASFGYKLLWVVVWANLMAMLIQVLSAKLGIATSKNLAEQIRDHYPRPVVWFYWVQAEIIAMATDLAEFIGAAIGFKLILGISLLQGAVLTGIATFLILMLQRRGQKPLEKVIGGLLLFVAAAYIVELIFSQPSLAQLSKGMIIPSLPNSEAVFLAAGVLGATIMPHVIYLHSSLTQHLHGGSRQQRYAATKWDVAIAMTIAGFVNLAMMATAAAAFHFSGHTGIADLDQAYLTLEPLLSHAAATVFGLSLVAAGLSSTVVGTLAGQVVMQGFVRFHIPLWVRRTITMMPSFIVILMGLDPTRILVMSQVLLSFGIALALVPLLIFTSDRTLMGDLVNTQWVKYIGWMIVVLVVALNIWLLVGTALGL.

The next 11 membrane-spanning stretches (helical) occupy residues 19–39 (LALM…GNFA), 46–66 (ASFG…AMLI), 94–114 (VWFY…AEFI), 122–142 (LILG…TFLI), 156–176 (VIGG…IFSQ), 196–216 (AVFL…IYLH), 241–261 (IAMT…AAAF), 290–310 (VFGL…TLAG), 329–349 (TITM…TRIL), 350–370 (VMSQ…LLIF), and 389–409 (IGWM…VGTA).

Belongs to the NRAMP family.

It is found in the cell inner membrane. In terms of biological role, h(+)-stimulated, divalent metal cation uptake system. The sequence is that of Divalent metal cation transporter MntH from Citrobacter koseri (strain ATCC BAA-895 / CDC 4225-83 / SGSC4696).